The primary structure comprises 523 residues: MPEMGALLLTTPALAAPGELLNLSLNASAVAPEGAVLLAMLATLLVDLAGEKVSTRWVPPICYAGLGTALLLLALQWNAPLEPSFLGAFLPDHLAIAFRAVVALSTLLSLMISWRYAEQGGTPVGEYAGILLAATLGGMLLCGATDLVSVFVSLETLSVASYLLSGYMKRDARSSEAALKYLLVGSAAAAVFLYGSSLLYGLSGSTSLEAIGQALLSSPTPLAALALVFVLATVAFKIAAVPFHQWTPDVYEGSPTPVVAFLSVGSKAAGFALALRLLVGCFGSFDTQWKLLFTVLAVLSMTLGNVVALAQTSMKRMLAYSSIGQAGFVMIGLVCGTEDGFAAMVLYTAAYLFMNLGAFACIILFSIRTGSDRIADYAGLYQKDPLITLGLSLCLLSLGGIPPMLGFFGKIYLFFAGWADHQYVLVVVGLITSVISIYYYIGVIKMMVVKEPQEASDAVKAYPPVQWSTLGLPPLRVALVTCVVVTAVGGILSNPLFQWASDAVAGTPLLQQAIASVNGSSLG.

13 helical membrane passes run 29–49 (AVAP…VDLA), 57–77 (WVPP…ALQW), 94–114 (LAIA…MISW), 128–148 (AGIL…TDLV), 182–202 (LLVG…LYGL), 223–243 (AALA…AVPF), 255–275 (PTPV…ALAL), 291–311 (LLFT…ALAQ), 317–337 (MLAY…VCGT), 345–365 (VLYT…IILF), 389–409 (LGLS…GFFG), 424–444 (VLVV…IGVI), and 477–497 (VALV…NPLF).

The protein belongs to the complex I subunit 2 family. As to quaternary structure, NDH-1 can be composed of about 15 different subunits; different subcomplexes with different compositions have been identified which probably have different functions.

It localises to the cellular thylakoid membrane. The enzyme catalyses a plastoquinone + NADH + (n+1) H(+)(in) = a plastoquinol + NAD(+) + n H(+)(out). It carries out the reaction a plastoquinone + NADPH + (n+1) H(+)(in) = a plastoquinol + NADP(+) + n H(+)(out). In terms of biological role, NDH-1 shuttles electrons from an unknown electron donor, via FMN and iron-sulfur (Fe-S) centers, to quinones in the respiratory and/or the photosynthetic chain. The immediate electron acceptor for the enzyme in this species is believed to be plastoquinone. Couples the redox reaction to proton translocation, and thus conserves the redox energy in a proton gradient. Cyanobacterial NDH-1 also plays a role in inorganic carbon-concentration. The chain is NAD(P)H-quinone oxidoreductase subunit 2 from Synechococcus sp. (strain WH7803).